A 485-amino-acid polypeptide reads, in one-letter code: UDP-N-acetylmuramoyl-L-alanyl-D-glutamate--2,6-diaminopimelate ligase (485 aa).

Ser-32 provides a ligand contact to UDP-N-acetyl-alpha-D-muramoyl-L-alanyl-D-glutamate. 111 to 117 (GTNGKTT) provides a ligand contact to ATP. Residues 153-154 (TT), Ser-180, and Arg-188 each bind UDP-N-acetyl-alpha-D-muramoyl-L-alanyl-D-glutamate. Position 220 is an N6-carboxylysine (Lys-220). Residues Arg-382, 405–408 (DNPR), Gly-455, and Glu-459 each bind meso-2,6-diaminopimelate. The short motif at 405–408 (DNPR) is the Meso-diaminopimelate recognition motif element.

This sequence belongs to the MurCDEF family. MurE subfamily. Mg(2+) serves as cofactor. In terms of processing, carboxylation is probably crucial for Mg(2+) binding and, consequently, for the gamma-phosphate positioning of ATP.

It is found in the cytoplasm. The catalysed reaction is UDP-N-acetyl-alpha-D-muramoyl-L-alanyl-D-glutamate + meso-2,6-diaminopimelate + ATP = UDP-N-acetyl-alpha-D-muramoyl-L-alanyl-gamma-D-glutamyl-meso-2,6-diaminopimelate + ADP + phosphate + H(+). Its pathway is cell wall biogenesis; peptidoglycan biosynthesis. In terms of biological role, catalyzes the addition of meso-diaminopimelic acid to the nucleotide precursor UDP-N-acetylmuramoyl-L-alanyl-D-glutamate (UMAG) in the biosynthesis of bacterial cell-wall peptidoglycan. This chain is UDP-N-acetylmuramoyl-L-alanyl-D-glutamate--2,6-diaminopimelate ligase, found in Chlamydia felis (strain Fe/C-56) (Chlamydophila felis).